The chain runs to 202 residues: CASP-like protein 2U7 (202 aa).

Topologically, residues 1–10 are cytoplasmic; that stretch reads MLELYEKRRA. Residues 11-31 form a helical membrane-spanning segment; the sequence is LLLLRLAAMFLSLAALLITVL. Topologically, residues 32 to 64 are extracellular; sequence NREDGFFSINVFGSPQPILTKATADFTLVKGLK. A helical membrane pass occupies residues 65 to 85; it reads FFAGAMGIVAGYSFLQLAIAM. Residues 86–101 are Cytoplasmic-facing; it reads ASMFSGAPSILGGKRM. A helical transmembrane segment spans residues 102 to 122; that stretch reads AWLCFVGDMTASHLCAAAAAV. Residues 123 to 148 lie on the Extracellular side of the membrane; it reads SAQLAYLGKRGAPMWSAVCTYFSHYC. Residues 149-169 traverse the membrane as a helical segment; that stretch reads LVFGLAVIFAFLATLAALLVA. The Cytoplasmic segment spans residues 170 to 202; the sequence is SISSYHLFRLHGILQQQQQQRRQLQQEHVQDKP.

Belongs to the Casparian strip membrane proteins (CASP) family. As to quaternary structure, homodimer and heterodimers.

It localises to the cell membrane. In Selaginella moellendorffii (Spikemoss), this protein is CASP-like protein 2U7.